Consider the following 215-residue polypeptide: Ribose-5-phosphate isomerase A (215 aa).

Residues 26–29 (TGST), 79–82 (DGAD), and 92–95 (KGGG) contribute to the substrate site. The active-site Proton acceptor is the glutamate 101. Position 119 (lysine 119) interacts with substrate.

Belongs to the ribose 5-phosphate isomerase family. As to quaternary structure, homodimer.

It carries out the reaction aldehydo-D-ribose 5-phosphate = D-ribulose 5-phosphate. It functions in the pathway carbohydrate degradation; pentose phosphate pathway; D-ribose 5-phosphate from D-ribulose 5-phosphate (non-oxidative stage): step 1/1. Its function is as follows. Catalyzes the reversible conversion of ribose-5-phosphate to ribulose 5-phosphate. This Xanthomonas euvesicatoria pv. vesicatoria (strain 85-10) (Xanthomonas campestris pv. vesicatoria) protein is Ribose-5-phosphate isomerase A.